We begin with the raw amino-acid sequence, 133 residues long: Interleukin-4 (133 aa).

Positions 1–24 (MGLTSQLIPTLVCLLACTSNFVHG) are cleaved as a signal peptide. 3 cysteine pairs are disulfide-bonded: C27–C133, C48–C85, and C70–C105. N-linked (GlcNAc...) asparagine glycosylation is present at N62.

Belongs to the IL-4/IL-13 family.

The protein localises to the secreted. Participates in at least several B-cell activation processes as well as of other cell types. It is a costimulator of DNA-synthesis. It induces the expression of class II MHC molecules on resting B-cells. It enhances both secretion and cell surface expression of IgE and IgG1. It also regulates the expression of the low affinity Fc receptor for IgE (CD23) on both lymphocytes and monocytes. Positively regulates IL31RA expression in macrophages. Stimulates autophagy in dendritic cells by interfering with mTORC1 signaling and through the induction of RUFY4. This Sus scrofa (Pig) protein is Interleukin-4 (IL4).